A 246-amino-acid polypeptide reads, in one-letter code: MNNNTMAPTYTLRGLQLIGWRDMQHALDYLFADGHLKQGTLVAINAEKMLTIEDNAEVRELINAAEFKYADGISVVRSVRKKYPQAQVSRVAGADLWEELMARAGKEGTPVFLVGGKPEVLAQTEAKLRNQWNVNIVGSQDGYFKPEQRQALFERIHASGAQIVTVAMGSPKQEIFMRDCRLVHPDALYMGVGGTYDVFTGHVKRAPKIWQTLGLEWLYRLLSQPSRIKRQLRLLRYLRWHYTGNL.

It belongs to the glycosyltransferase 26 family.

The enzyme catalyses UDP-N-acetyl-alpha-D-mannosaminouronate + N-acetyl-alpha-D-glucosaminyl-di-trans,octa-cis-undecaprenyl diphosphate = beta-D-ManNAcA-(1-&gt;4)-alpha-D-GlcNAc-di-trans,octa-cis-undecaprenyl diphosphate + UDP + H(+). The protein operates within bacterial outer membrane biogenesis; enterobacterial common antigen biosynthesis. Catalyzes the synthesis of Und-PP-GlcNAc-ManNAcA (Lipid II), the second lipid-linked intermediate involved in enterobacterial common antigen (ECA) synthesis. In Escherichia coli (strain 55989 / EAEC), this protein is UDP-N-acetyl-D-mannosaminuronic acid transferase.